Consider the following 115-residue polypeptide: MSLDPTIAARLKRNADGLFTAVVQERGSGDVLMVAWMDDDALARTLETREATYFSRSRGEQWIKGRTSGHTQHVHSVRLDCDGDTVLLVVDQVGGACHTGDHSCFDADLLLDPEA.

D80 contacts Mg(2+). C81 contacts Zn(2+). Residues D82 and D84 each contribute to the Mg(2+) site. 2 residues coordinate Zn(2+): C97 and C104.

This sequence belongs to the PRA-CH family. In terms of assembly, homodimer. Requires Mg(2+) as cofactor. Zn(2+) serves as cofactor.

Its subcellular location is the cytoplasm. It catalyses the reaction 1-(5-phospho-beta-D-ribosyl)-5'-AMP + H2O = 1-(5-phospho-beta-D-ribosyl)-5-[(5-phospho-beta-D-ribosylamino)methylideneamino]imidazole-4-carboxamide. It functions in the pathway amino-acid biosynthesis; L-histidine biosynthesis; L-histidine from 5-phospho-alpha-D-ribose 1-diphosphate: step 3/9. Catalyzes the hydrolysis of the adenine ring of phosphoribosyl-AMP. The polypeptide is Phosphoribosyl-AMP cyclohydrolase (Mycolicibacterium gilvum (strain PYR-GCK) (Mycobacterium gilvum (strain PYR-GCK))).